The primary structure comprises 325 residues: MAQQVQLSATVAESQLGQRLDQALAELFPDYSRSRIKEWILDSRVTVNGKKINKPKEKVLGGELVAIDAQIEEDARWAPQEIPLDIVYEDNDILVINKPRGLVVHPGAGNPDGTVLNALLHYYPEIMDVPRAGIVHRLDKDTTGLMVVAKTVPAQTRLVEALQAREITREYEAVAIGNMTAGGRVDEPISRHSTKRTHMAVHPMGKPATTHYRIMEHFRAHTRLRLRLETGRTHQIRVHMSHINHPLVGDQLYGGRPRPPKGASDSFIAILRGFDRQALHATMLRLYHPIRGIQMEWHAALPEDMVELINALKADTEEFKDQMDW.

In terms of domain architecture, S4 RNA-binding spans 18 to 91; it reads QRLDQALAEL…IPLDIVYEDN (74 aa). The active site involves Asp-139.

The protein belongs to the pseudouridine synthase RluA family.

Its subcellular location is the cytoplasm. It catalyses the reaction uridine(1911/1915/1917) in 23S rRNA = pseudouridine(1911/1915/1917) in 23S rRNA. Responsible for synthesis of pseudouridine from uracil at positions 1911, 1915 and 1917 in 23S ribosomal RNA. The chain is Ribosomal large subunit pseudouridine synthase D (rluD) from Yersinia pestis.